Here is a 503-residue protein sequence, read N- to C-terminus: UDP-N-acetylmuramoylalanine--D-glutamate ligase (503 aa).

An ATP-binding site is contributed by 129-135; the sequence is GTNGKTT. The segment at 284-305 is disordered; sequence DSEAEGEGKPRRRKADATAQEA.

This sequence belongs to the MurCDEF family.

The protein localises to the cytoplasm. It catalyses the reaction UDP-N-acetyl-alpha-D-muramoyl-L-alanine + D-glutamate + ATP = UDP-N-acetyl-alpha-D-muramoyl-L-alanyl-D-glutamate + ADP + phosphate + H(+). It participates in cell wall biogenesis; peptidoglycan biosynthesis. In terms of biological role, cell wall formation. Catalyzes the addition of glutamate to the nucleotide precursor UDP-N-acetylmuramoyl-L-alanine (UMA). This chain is UDP-N-acetylmuramoylalanine--D-glutamate ligase, found in Cupriavidus pinatubonensis (strain JMP 134 / LMG 1197) (Cupriavidus necator (strain JMP 134)).